The following is a 1426-amino-acid chain: A disintegrin and metalloproteinase with thrombospondin motifs 13 (1426 aa).

Positions 1-33 (MSQLCLWLTCQPCYAVSVRGILTGAIFILGCWG) are cleaved as a signal peptide. Residues 34–76 (LSDFQKSLLQDLEPKDVSSYFGHHAAPFTGHPPSHLQRLRRRR) constitute a propeptide that is removed on maturation. Residues 74 to 291 (RRRTLEDILH…GQMHCFQDPP (218 aa)) enclose the Peptidase M12B domain. Residue Glu-85 participates in Ca(2+) binding. Residues Asn-144 and Asn-148 are each glycosylated (N-linked (GlcNAc...) asparagine). Cystine bridges form between Cys-157/Cys-210, Cys-204/Cys-286, and Cys-246/Cys-270. Residues Asp-175, Asp-184, Glu-186, Asp-189, and Glu-214 each coordinate Ca(2+). His-226 provides a ligand contact to Zn(2+). Glu-227 is a catalytic residue. The Zn(2+) site is built by His-230 and His-236. The Ca(2+) site is built by Thr-281 and Asp-289. In terms of domain architecture, Disintegrin spans 295 to 388 (SGLTRHQLMA…LAELAPVAAV (94 aa)). Intrachain disulfides connect Cys-316/Cys-342, Cys-327/Cys-352, Cys-337/Cys-371, Cys-365/Cys-376, Cys-401/Cys-438, Cys-405/Cys-443, Cys-416/Cys-428, Cys-488/Cys-527, Cys-513/Cys-532, Cys-537/Cys-553, and Cys-550/Cys-560. The 56-residue stretch at 389-444 (HGHWSSWGPHSPCSRSCGGGVITRRRWCNNPRPAFGGRACVGEDLQAKMCNTQACE) folds into the TSP type-1 1 domain. The tract at residues 445–561 (KTQLEFMSEQ…VCGGDNSTCS (117 aa)) is cysteine-rich. The Cell attachment site motif lies at 503-505 (RGD). The tract at residues 556–685 (DNSTCSSRNG…PDITFSYFQL (130 aa)) is spacer. Residues Asn-557, Asn-564, Asn-584, and Asn-619 are each glycosylated (N-linked (GlcNAc...) asparagine). 7 TSP type-1 domains span residues 687–746 (QQAA…VSAP), 747–810 (CSPY…QPCP), 808–871 (PCPT…SLCS), 904–957 (WTPL…RARP), 958–1019 (CPAR…EPCP), 1020–1078 (ARWK…IADC), and 1079–1137 (AFRW…GPCA). Residues Ser-703 and Ser-762 are each glycosylated (O-linked (Fuc...) serine). Asn-834 carries N-linked (GlcNAc...) asparagine glycosylation. Residue Ser-914 is glycosylated (O-linked (Fuc...) serine). An O-linked (Fuc...) threonine glycan is attached at Thr-973. Ser-1033 is a glycosylation site (O-linked (Fuc...) serine). N-linked (GlcNAc...) asparagine glycosylation occurs at Asn-1057. O-linked (Fuc...) serine glycosylation is present at Ser-1093. CUB domains follow at residues 1195 to 1302 (ACGR…FYKE) and 1293 to 1426 (QPAP…LALS).

Requires Zn(2+) as cofactor. The cofactor is Ca(2+). In terms of processing, the precursor is processed by a furin endopeptidase which cleaves off the pro-domain. O-glycosylated. O-fucosylated by POFUT2 on a serine or a threonine residue found within the consensus sequence C1-X(2)-(S/T)-C2-G of the TSP type-1 repeat domains where C1 and C2 are the first and second cysteine residue of the repeat, respectively. Fucosylated repeats can then be further glycosylated by the addition of a beta-1,3-glucose residue by the glucosyltransferase, B3GALTL. Fucosylation mediates the efficient secretion of ADAMTS13. May also be C-glycosylated on tryptophan residues within the consensus sequence W-X-X-W of the TPRs, and also N-glycosylated. These other glycosylations can also facilitate secretion. As to expression, plasma. Expression is consistently high in liver, medium in lung and spleen, low in skeletal muscle and undetectable in heart, brain, kidney and testis.

The protein localises to the secreted. It catalyses the reaction The enzyme cleaves the von Willebrand factor at bond 842-Tyr-|-Met-843 within the A2 domain.. Zinc and calcium ions cooperatively modulate enzyme activity. The cleavage of the pro-domain is not required for protease activity. Dependence on calcium for proteolytic activity is mediated by the high affinity site. Functionally, cleaves the vWF multimers in plasma into smaller forms thereby controlling vWF-mediated platelet thrombus formation. This is A disintegrin and metalloproteinase with thrombospondin motifs 13 (Adamts13) from Mus musculus (Mouse).